Here is a 390-residue protein sequence, read N- to C-terminus: S-adenosylmethionine synthase 1 (390 aa).

Glu9 contacts Mg(2+). His15 is an ATP binding site. K(+) is bound at residue Glu43. L-methionine is bound by residues Glu56 and Gln99. ATP is bound by residues 167 to 169 (DGK), 235 to 238 (SGRF), Asp246, 252 to 253 (RK), Ala269, Lys273, and Lys277. Residue Asp246 coordinates L-methionine. L-methionine is bound at residue Lys277.

Belongs to the AdoMet synthase family. In terms of assembly, homotetramer. Mn(2+) serves as cofactor. Requires Mg(2+) as cofactor. Co(2+) is required as a cofactor. It depends on K(+) as a cofactor.

It localises to the cytoplasm. The catalysed reaction is L-methionine + ATP + H2O = S-adenosyl-L-methionine + phosphate + diphosphate. It participates in amino-acid biosynthesis; S-adenosyl-L-methionine biosynthesis; S-adenosyl-L-methionine from L-methionine: step 1/1. Its function is as follows. Catalyzes the formation of S-adenosylmethionine from methionine and ATP. The reaction comprises two steps that are both catalyzed by the same enzyme: formation of S-adenosylmethionine (AdoMet) and triphosphate, and subsequent hydrolysis of the triphosphate. This chain is S-adenosylmethionine synthase 1 (SAM1), found in Petunia hybrida (Petunia).